Here is a 509-residue protein sequence, read N- to C-terminus: BPI fold-containing family C protein (509 aa).

A signal peptide spans 1 to 23 (MRTKQVPVLWACFLLWSLYIASS). Asn63, Asn79, Asn92, Asn113, and Asn117 each carry an N-linked (GlcNAc...) asparagine glycan. A disulfide bond links Cys161 and Cys202. N-linked (GlcNAc...) asparagine glycans are attached at residues Asn215, Asn227, Asn357, Asn374, and Asn457.

The protein belongs to the BPI/LBP/Plunc superfamily. BPI/LBP family.

It localises to the secreted. In Mus musculus (Mouse), this protein is BPI fold-containing family C protein (Bpifc).